Reading from the N-terminus, the 92-residue chain is Large ribosomal subunit protein eL43 (92 aa).

Residues 39 to 60 (CSFCGKKTVRRGAAGIWSCHSC) form a C4-type zinc finger.

This sequence belongs to the eukaryotic ribosomal protein eL43 family.

The polypeptide is Large ribosomal subunit protein eL43 (RPL43) (Candida glabrata (strain ATCC 2001 / BCRC 20586 / JCM 3761 / NBRC 0622 / NRRL Y-65 / CBS 138) (Yeast)).